A 521-amino-acid chain; its full sequence is Amidase 1 (521 aa).

Active-site charge relay system residues include Lys112 and Ser187. Substrate is bound by residues Ser187 and 208–211 (IGGS). Ser211 acts as the Acyl-ester intermediate in catalysis.

It belongs to the amidase family.

It catalyses the reaction a monocarboxylic acid amide + H2O = a monocarboxylate + NH4(+). Its pathway is xenobiotic degradation. Amidase; part of the Fusarium detoxification of benzoxazolinone cluster 1 (FDB1) involved in the degradation of benzoxazolinones produced by the host plant. Maize, wheat, and rye produce the 2 benzoxazinone phytoanticipins 2,4-dihy-droxy-7-methoxy-1,4-benzoxazin-3-one (DIMBOA) and 2,4-dihydroxy-1,4-benzoxazin-3-one (DIBOA) that, due to their inherent instability once released, spontaneously degrade to the more stable corresponding benzoxazolinones, 6-methoxy-2-benzoxazolinone (MBOA) and 2-benzoxazolinone (BOA), respectively. The first step in the detoxification of benzoxazolinones involves the hydrolysis of the cyclic ester bond of benzoxazolinones by the FDB1 cluster gamma-lactamase MBL1 to aminophenols. MBL1 is able to convert BOA into 2-aminophenol (2-AP), as well as MBOA into 5-methoxy-2-aminophenol (2-AMP). The FDB2 cluster N-malonyltransferase FDB2/NAT1 then metabolizes aminophenols via N-malonylation to non-toxic malonamic acids. FDB2/NAT1 converts 2-AP into N-(2-hydroxyphenyl) malonamic acid (HPMA) and 2-AMP into N-(2-hydroxy-4-methoxyphenyl) malonamic acid (HMPMA). The duplicated dienlactone hydrolases DLH1 and DLH2 may provide redundant function for hydrolyzing the lactone moiety in the BOA molecule. The roles of the amidases an other enzymes encoded by the 2 FDB clusters have not been identified so far. The polypeptide is Amidase 1 (Gibberella moniliformis (strain M3125 / FGSC 7600) (Maize ear and stalk rot fungus)).